Here is a 685-residue protein sequence, read N- to C-terminus: Putative alpha-1,3-mannosyltransferase MNN14 (685 aa).

The Cytoplasmic portion of the chain corresponds to 1 to 13; it reads MGLLSIPYQSKSK. The helical transmembrane segment at 14–34 threads the bilayer; it reads LWIAIFLVVWSLISMHFIWQS. Over 35–685 the chain is Lumenal; that stretch reads QANSGLILKN…EIWMRGYNYL (651 aa). Residues asparagine 199, asparagine 338, asparagine 408, and asparagine 556 are each glycosylated (N-linked (GlcNAc...) asparagine).

The protein belongs to the MNN1/MNT family.

Its subcellular location is the golgi apparatus membrane. It participates in protein modification; protein glycosylation. Functionally, responsible for addition of the terminal mannose residues to the outer chain of core N-linked polysaccharides and to O-linked mannotriose. Implicated in late Golgi modifications. Involved in virulence. In Candida albicans (strain SC5314 / ATCC MYA-2876) (Yeast), this protein is Putative alpha-1,3-mannosyltransferase MNN14 (MNN14).